The primary structure comprises 253 residues: Ditrans,polycis-undecaprenyl-diphosphate synthase ((2E,6E)-farnesyl-diphosphate specific) (253 aa).

Residue Asp25 is part of the active site. Asp25 serves as a coordination point for Mg(2+). Residues 26-29 (GNGR), Trp30, Arg38, His42, and 70-72 (SSE) each bind substrate. Asn73 serves as the catalytic Proton acceptor. Positions 74, 76, and 193 each coordinate substrate. His198 provides a ligand contact to Mg(2+). 199–201 (RIS) is a substrate binding site. Glu212 provides a ligand contact to Mg(2+).

It belongs to the UPP synthase family. In terms of assembly, homodimer. Requires Mg(2+) as cofactor.

The catalysed reaction is 8 isopentenyl diphosphate + (2E,6E)-farnesyl diphosphate = di-trans,octa-cis-undecaprenyl diphosphate + 8 diphosphate. In terms of biological role, catalyzes the sequential condensation of isopentenyl diphosphate (IPP) with (2E,6E)-farnesyl diphosphate (E,E-FPP) to yield (2Z,6Z,10Z,14Z,18Z,22Z,26Z,30Z,34E,38E)-undecaprenyl diphosphate (di-trans,octa-cis-UPP). UPP is the precursor of glycosyl carrier lipid in the biosynthesis of bacterial cell wall polysaccharide components such as peptidoglycan and lipopolysaccharide. This Pectobacterium atrosepticum (strain SCRI 1043 / ATCC BAA-672) (Erwinia carotovora subsp. atroseptica) protein is Ditrans,polycis-undecaprenyl-diphosphate synthase ((2E,6E)-farnesyl-diphosphate specific).